A 522-amino-acid chain; its full sequence is MSNRVIIFDTTLRDGEQALAASLSVKEKLQIAMALERLGVDVMEVGFPVSSPGDFESVQTIARTIKNSRVCALSRALEKDIDAAAQALSVADQFRIHTFISTSTIHVESKLKRSFDQVLEMAVSAVKYARRFTDDVEFSCEDAGRTPIDNLCRMVEAAILAGARTINIPDTVGYTVPSEFGTIIQTLFNRVPNIDQAVISVHCHDDLGLSVANSITAVQHGARQIECTINGIGERAGNCSLEEIAMILATRKGMLGLETGINAKEIHRTSNLVSQLCNMPVQANKAIVGANAFTHSSGIHQDGMLKAQNTYEIMTPESIGLNRNNLNMTSRSGRHVIKHRMEEMGYSEHDYNMDALYEEFLKLADKKGQVFDYDLEALAFMEAQAEEDNHYQLQQLVVQSDSTEGVATATVRIEVGGEIKTEAATGNGPVDAAYNAIARATDRRIDIISYKLGAKGVGQNALGQVDITAVYHEQNFHGVGLATDVVEASARALVHVMNLTCRADKVADYKQSMQKNRELGGV.

The region spanning 5–267 (VIIFDTTLRD…ETGINAKEIH (263 aa)) is the Pyruvate carboxyltransferase domain. 4 residues coordinate Mn(2+): Asp-14, His-202, His-204, and Asn-238. Residues 392 to 522 (QLQQLVVQSD…MQKNRELGGV (131 aa)) are regulatory domain.

It belongs to the alpha-IPM synthase/homocitrate synthase family. LeuA type 1 subfamily. Homodimer. The cofactor is Mn(2+).

The protein resides in the cytoplasm. It carries out the reaction 3-methyl-2-oxobutanoate + acetyl-CoA + H2O = (2S)-2-isopropylmalate + CoA + H(+). It functions in the pathway amino-acid biosynthesis; L-leucine biosynthesis; L-leucine from 3-methyl-2-oxobutanoate: step 1/4. In terms of biological role, catalyzes the condensation of the acetyl group of acetyl-CoA with 3-methyl-2-oxobutanoate (2-ketoisovalerate) to form 3-carboxy-3-hydroxy-4-methylpentanoate (2-isopropylmalate). In Shewanella baltica (strain OS155 / ATCC BAA-1091), this protein is 2-isopropylmalate synthase.